The primary structure comprises 454 residues: Chromosomal replication initiator protein DnaA (454 aa).

A domain I, interacts with DnaA modulators region spans residues 1–83 (MTEKEHFFWN…IKVEYVFDEA (83 aa)). Residues 83 to 113 (ALVSETKPTLANNDFSNKREQQTPDLPTLNS) are domain II. A domain III, AAA+ region region spans residues 114-332 (DLNSKYTFDN…GALKDISLVA (219 aa)). The ATP site is built by Gly-158, Gly-160, Lys-161, and Thr-162. Residues 333 to 454 (NVRQLDTITV…EIDTIKNKIK (122 aa)) are domain IV, binds dsDNA.

It belongs to the DnaA family. Oligomerizes as a right-handed, spiral filament on DNA at oriC.

It is found in the cytoplasm. In terms of biological role, plays an essential role in the initiation and regulation of chromosomal replication. ATP-DnaA binds to the origin of replication (oriC) to initiate formation of the DNA replication initiation complex once per cell cycle. Binds the DnaA box (a 9 base pair repeat at the origin) and separates the double-stranded (ds)DNA. Forms a right-handed helical filament on oriC DNA; dsDNA binds to the exterior of the filament while single-stranded (ss)DNA is stabiized in the filament's interior. The ATP-DnaA-oriC complex binds and stabilizes one strand of the AT-rich DNA unwinding element (DUE), permitting loading of DNA polymerase. After initiation quickly degrades to an ADP-DnaA complex that is not apt for DNA replication. Binds acidic phospholipids. The sequence is that of Chromosomal replication initiator protein DnaA from Streptococcus thermophilus (strain ATCC BAA-250 / LMG 18311).